The sequence spans 119 residues: Large ribosomal subunit protein uL18 (119 aa).

This sequence belongs to the universal ribosomal protein uL18 family. As to quaternary structure, part of the 50S ribosomal subunit; part of the 5S rRNA/L5/L18/L25 subcomplex. Contacts the 5S and 23S rRNAs.

This is one of the proteins that bind and probably mediate the attachment of the 5S RNA into the large ribosomal subunit, where it forms part of the central protuberance. The sequence is that of Large ribosomal subunit protein uL18 from Clostridium kluyveri (strain ATCC 8527 / DSM 555 / NBRC 12016 / NCIMB 10680 / K1).